Consider the following 1337-residue polypeptide: MMSASNLSVIHEVLLVLLNHQRINLPYENLEASLSRMLFLSSFVQEVVQVPIPCNVSANRSVSGVYSPGDLVWAKMEGYPWWPCLIYNHPTEGTIVRGKGSSARIHVQFFDVSPTRGWVSIKYLRPYKGSSDREVLKGGMFYSMKPEIKKAMELADDAMSKDKTKRLELAVCSEPSDTEEAEEEEMEQMSGSASGDSDDSNSEEDVKGNKRVPNRGSAIKAKRRRVLDSDSDRDGSDVEFKPDVKEASSEEASSGVDENEATDVETDEESIEESPIKVPSKRKRGNVSKPSKRSSLENEHSEAPKRAAPVSLEAKSKLTLFAAPENFESQANACSGGTNGFAAWEHEKLEWLQEGKKKDAHRRRQNHPDYDPCTLYVPEDYLNKCTPGMRRWWQLKSQNFDAVICYKVGKFYELYHMDAVTGVNELGLIFMKGSWAHSGFPETAFGRFSAILVQKGYKIARVEQTETPEMMEARCKATAHTTKFDKVVRREICRIITKGTQTYSIIDCDPTENHNKYLLCVKEKEDSSGQRVYGVCFVDTSVGKFYVGQFSDDRHCSRFRTLVAHYTPVQVLFEKGNLTVDTQKILKGSLISCIQEGLISGSQFWSASKTLKVLLEEEYFKENQNTESGCVLPSVIKSLTSESDSLGLTPGENSELALSALGGIVFYLKKCLIDQELLSLANFEKYIPVDADNAKTVSSSNFFARTDRRMVLDGVTLMNLEVLQNGTNGTTEGTLLERIDSCCTPFGKRLLKQWLCAPLCNPTSINDRLDAVEDLLAVPAKLTEITEHLKKLPDLERLLSKIHSIGSPLKSQNHPDSRAIFYEEIKYSKKKIADFLSALEGFKVMNEIVDAMEEVASDFKSQVLKQLVTRKAKHPDGRFPDLSAELKRWDTAFDHNQARKTGVITPKAGFDPDYDKALQDIKTVEEDFRTYLDKQRKLLGLKSVLYWGTGKNRYQMEIPETATSRNLPEEYELKSTRKGYKRYWTKEIEKMLAELINAEERRDAALKDCMRRLFYNFDKNSQDWQTAVQCIAVLDVLMSLANYSQDGDGPLCRPVILLPVDSAPPFLELKNARHPCITKTFFGDDFIPNDIVIGSKDEDGGSEASCVLVTGPNMGGKSTLMRQAGLLVIMAQLGCYVPAEVCRLTPIDRVFTRLGASDRIMSGESTFFVELSETSSILQHATEHSLVLVDELGRGTATFDGTAIASAVVRELAENIKCRTLFSTHYHSLVEDYSGSAAVRLGHMACMVENESEDPSQETITFLYKFIEGACPKSYGFNAARLADIPEEIIQKGHRKAKEFEKKTMSLRIFRFLCRVVDGVTHDANAVGKLTTMLSHL.

Positions 68 to 130 (PGDLVWAKME…IKYLRPYKGS (63 aa)) constitute a PWWP domain. Residues 170 to 310 (AVCSEPSDTE…SEAPKRAAPV (141 aa)) form a disordered region. A compositionally biased stretch (acidic residues) spans 176-187 (SDTEEAEEEEME). Over residues 226-248 (VLDSDSDRDGSDVEFKPDVKEAS) the composition is skewed to basic and acidic residues. The segment covering 257–272 (DENEATDVETDEESIE) has biased composition (acidic residues). Over residues 279-292 (PSKRKRGNVSKPSK) the composition is skewed to basic residues. The span at 294 to 305 (SSLENEHSEAPK) shows a compositional bias: basic and acidic residues. ATP is bound at residue 1111 to 1118 (GPNMGGKS).

Belongs to the DNA mismatch repair MutS family.

The protein resides in the nucleus. Functionally, component of the post-replicative DNA mismatch repair system (MMR). Involved in B cell growth by positively regulating B cell proliferation and controlling replication efficiency. Controls cell cycle to prevent re-replication and defects in DNA damage-induced G2 checkpoint. Doesn't seem to counteract or control the immunoglobulin gene conversion (Ig GC) and to contribute to guanine/uracil mismatch repair. The polypeptide is DNA mismatch repair protein Msh6 (Gallus gallus (Chicken)).